A 403-amino-acid polypeptide reads, in one-letter code: Accessory Sec system protein translocase subunit SecY2 (403 aa).

The next 10 helical transmembrane spans lie at 17–37, 63–83, 105–125, 131–151, 157–177, 186–206, 240–260, 276–296, 339–359, and 366–386; these read MLYT…SIVS, LNIF…LMLI, ILTL…YVSK, DNIY…VWLA, YGIA…MMHQ, HIVI…LLFI, ITLM…HFIL, FDSP…GYFL, WFGS…TLFV, and IYFS…AETI.

It belongs to the SecY/SEC61-alpha family. SecY2 subfamily. Component of the accessory SecA2/SecY2 protein translocase complex required to export cell wall proteins. May form heterotrimers with SecE and SecG subunits.

Its subcellular location is the cell membrane. In terms of biological role, part of the accessory SecA2/SecY2 system specifically required for export of possible cell wall proteins. The central subunit of a protein translocation channel. In Staphylococcus aureus (strain N315), this protein is Accessory Sec system protein translocase subunit SecY2.